The primary structure comprises 39 residues: Bacteriocin SRCAM 602 (39 aa).

The protein belongs to the bacteriocin class IIA/YGNGV family.

The protein resides in the secreted. Bacteriocin with antibacterial activity against C.jejuni. This Paenibacillus polymyxa (Bacillus polymyxa) protein is Bacteriocin SRCAM 602.